The sequence spans 89 residues: Signal recognition particle 19 kDa protein (89 aa).

Belongs to the SRP19 family. Part of the signal recognition particle protein translocation system, which is composed of SRP and FtsY. Archaeal SRP consists of a 7S RNA molecule of 300 nucleotides and two protein subunits: SRP54 and SRP19.

It is found in the cytoplasm. In terms of biological role, involved in targeting and insertion of nascent membrane proteins into the cytoplasmic membrane. Binds directly to 7S RNA and mediates binding of the 54 kDa subunit of the SRP. This Methanococcus maripaludis (strain DSM 14266 / JCM 13030 / NBRC 101832 / S2 / LL) protein is Signal recognition particle 19 kDa protein.